Reading from the N-terminus, the 439-residue chain is 3-phosphoshikimate 1-carboxyvinyltransferase (439 aa).

3-phosphoshikimate-binding residues include K31, S32, and R36. Phosphoenolpyruvate is bound at residue K31. Residues G103 and R131 each coordinate phosphoenolpyruvate. S175, Q177, D322, and K349 together coordinate 3-phosphoshikimate. Residue Q177 coordinates phosphoenolpyruvate. D322 serves as the catalytic Proton acceptor. Residues R353 and R397 each coordinate phosphoenolpyruvate.

Belongs to the EPSP synthase family. Monomer.

Its subcellular location is the cytoplasm. It carries out the reaction 3-phosphoshikimate + phosphoenolpyruvate = 5-O-(1-carboxyvinyl)-3-phosphoshikimate + phosphate. Its pathway is metabolic intermediate biosynthesis; chorismate biosynthesis; chorismate from D-erythrose 4-phosphate and phosphoenolpyruvate: step 6/7. Functionally, catalyzes the transfer of the enolpyruvyl moiety of phosphoenolpyruvate (PEP) to the 5-hydroxyl of shikimate-3-phosphate (S3P) to produce enolpyruvyl shikimate-3-phosphate and inorganic phosphate. In Clostridium tetani (strain Massachusetts / E88), this protein is 3-phosphoshikimate 1-carboxyvinyltransferase.